The chain runs to 1196 residues: Truncated transposon Ty1-A Gag-Pol polyprotein (1196 aa).

The Integrase catalytic domain maps to 101 to 276; it reads NSYEPFQYLH…AGLDISTLLP (176 aa). Asp-112 and Asp-177 together coordinate Mg(2+). 3 disordered regions span residues 397–528, 533–552, and 571–628; these read SKAV…ETEK, RSPS…NIVP, and DLPL…DNET. Positions 401-410 are enriched in low complexity; sequence SPTDSTPPST. Residues 446–456 are compositionally biased toward polar residues; that stretch reads STPQISNIEST. Basic and acidic residues predominate over residues 479–494; the sequence is ESSHASKSKDFRHSDS. Composition is skewed to polar residues over residues 495-523 and 542-552; these read YSEN…QISD and PENNSSHNIVP. Residues 619–653 carry the Bipartite nuclear localization signal motif; sequence KKRSLEDNETEIKVSRDTWNTKNMRSLEPPRSKKR. The 139-residue stretch at 779–917 folds into the Reverse transcriptase Ty1/copia-type domain; the sequence is NNYYITQLDI…DILGLEIKYQ (139 aa). Residues Asp-787, Asp-868, Asp-869, Asp-1051, Glu-1093, and Asp-1126 each contribute to the Mg(2+) site. Residues 1051 to 1193 enclose the RNase H Ty1/copia-type domain; the sequence is DASYGNQPYY…IKTFKLLTNK (143 aa).

In terms of processing, initially, virus-like particles (VLPs) are composed of the structural unprocessed proteins Gag and Gag-Pol, and also contain the host initiator methionine tRNA (tRNA(i)-Met) which serves as a primer for minus-strand DNA synthesis, and a dimer of genomic Ty RNA. Processing of the polyproteins occurs within the particle and proceeds by an ordered pathway, called maturation. First, the protease (PR) is released by autocatalytic cleavage of the Gag-Pol polyprotein yielding capsid protein p45 and a Pol-p154 precursor protein. This cleavage is a prerequisite for subsequent processing of Pol-p154 at the remaining sites to release the mature structural and catalytic proteins. Maturation takes place prior to the RT reaction and is required to produce transposition-competent VLPs.

It is found in the cytoplasm. It localises to the nucleus. It carries out the reaction DNA(n) + a 2'-deoxyribonucleoside 5'-triphosphate = DNA(n+1) + diphosphate. The enzyme catalyses Endonucleolytic cleavage to 5'-phosphomonoester.. In terms of biological role, reverse transcriptase/ribonuclease H (RT) is a multifunctional enzyme that catalyzes the conversion of the retro-elements RNA genome into dsDNA within the VLP. The enzyme displays a DNA polymerase activity that can copy either DNA or RNA templates, and a ribonuclease H (RNase H) activity that cleaves the RNA strand of RNA-DNA heteroduplexes during plus-strand synthesis and hydrolyzes RNA primers. The conversion leads to a linear dsDNA copy of the retrotransposon that includes long terminal repeats (LTRs) at both ends. Functionally, integrase (IN) targets the VLP to the nucleus, where a subparticle preintegration complex (PIC) containing at least integrase and the newly synthesized dsDNA copy of the retrotransposon must transit the nuclear membrane. Once in the nucleus, integrase performs the integration of the dsDNA into the host genome. This is Truncated transposon Ty1-A Gag-Pol polyprotein (TY1B-A) from Saccharomyces cerevisiae (strain ATCC 204508 / S288c) (Baker's yeast).